Reading from the N-terminus, the 86-residue chain is Exodeoxyribonuclease 7 small subunit (86 aa).

Residues 67 to 86 (RVSPASGGATEAPAPAERDR) form a disordered region.

Belongs to the XseB family. In terms of assembly, heterooligomer composed of large and small subunits.

It localises to the cytoplasm. The enzyme catalyses Exonucleolytic cleavage in either 5'- to 3'- or 3'- to 5'-direction to yield nucleoside 5'-phosphates.. Functionally, bidirectionally degrades single-stranded DNA into large acid-insoluble oligonucleotides, which are then degraded further into small acid-soluble oligonucleotides. This is Exodeoxyribonuclease 7 small subunit from Beutenbergia cavernae (strain ATCC BAA-8 / DSM 12333 / CCUG 43141 / JCM 11478 / NBRC 16432 / NCIMB 13614 / HKI 0122).